A 333-amino-acid chain; its full sequence is Phosphoribosylformylglycinamidine cyclo-ligase (333 aa).

It belongs to the AIR synthase family.

It localises to the cytoplasm. The enzyme catalyses 2-formamido-N(1)-(5-O-phospho-beta-D-ribosyl)acetamidine + ATP = 5-amino-1-(5-phospho-beta-D-ribosyl)imidazole + ADP + phosphate + H(+). It participates in purine metabolism; IMP biosynthesis via de novo pathway; 5-amino-1-(5-phospho-D-ribosyl)imidazole from N(2)-formyl-N(1)-(5-phospho-D-ribosyl)glycinamide: step 2/2. In Clostridium perfringens (strain ATCC 13124 / DSM 756 / JCM 1290 / NCIMB 6125 / NCTC 8237 / Type A), this protein is Phosphoribosylformylglycinamidine cyclo-ligase.